Reading from the N-terminus, the 256-residue chain is 6-carboxyhexanoate--CoA ligase (256 aa).

It belongs to the BioW family. Homodimer. Requires Mg(2+) as cofactor.

The enzyme catalyses heptanedioate + ATP + CoA = 6-carboxyhexanoyl-CoA + AMP + diphosphate. Its pathway is metabolic intermediate metabolism; pimeloyl-CoA biosynthesis; pimeloyl-CoA from pimelate: step 1/1. In terms of biological role, catalyzes the transformation of pimelate into pimeloyl-CoA with concomitant hydrolysis of ATP to AMP. This is 6-carboxyhexanoate--CoA ligase from Methanobrevibacter ruminantium (strain ATCC 35063 / DSM 1093 / JCM 13430 / OCM 146 / M1) (Methanobacterium ruminantium).